A 174-amino-acid chain; its full sequence is Peptide methionine sulfoxide reductase MsrA (174 aa).

Residue C11 is part of the active site.

This sequence belongs to the MsrA Met sulfoxide reductase family.

It carries out the reaction L-methionyl-[protein] + [thioredoxin]-disulfide + H2O = L-methionyl-(S)-S-oxide-[protein] + [thioredoxin]-dithiol. The enzyme catalyses [thioredoxin]-disulfide + L-methionine + H2O = L-methionine (S)-S-oxide + [thioredoxin]-dithiol. In terms of biological role, has an important function as a repair enzyme for proteins that have been inactivated by oxidation. Catalyzes the reversible oxidation-reduction of methionine sulfoxide in proteins to methionine. The polypeptide is Peptide methionine sulfoxide reductase MsrA (Haloquadratum walsbyi (strain DSM 16790 / HBSQ001)).